Here is a 364-residue protein sequence, read N- to C-terminus: MSHNTFGHLFRVTTWGESHGAALGCVIDGCPPGIAFTLTEIQAYLNKRRPGHSEYTTQRRELDQVEILSGVVSQNDGKALVTTGTPISMFIRNVDHHSEDYNAIMHKYRPGHADYTYDVKYGIRDHRGGGRASARETVVRVAAGALARKIVPGLIVRGAVTAIGPHNIDRDRWDWSEVDKNPFFSPDAQAACVFANYISQLCKTGSSVGAIVEIVAENVPAGLGAPVYAKLDQDIASFLMSINAVKGIEIGDGFAAAHLTGEENADEMRMGSDGKPVFLSNHAGGILGGISNGQPIVARFAVKPTSSILTPSRSIDIEGNDVNVMTKGRHDPCVGIRAVPVGEAMVACAIADHYLRHRGQVGCI.

Arg-48 is an NADP(+) binding site. FMN is bound by residues 131–133 (RAS), 243–244 (NA), Gly-288, 303–307 (KPTSS), and Arg-329.

This sequence belongs to the chorismate synthase family. In terms of assembly, homotetramer. It depends on FMNH2 as a cofactor.

It catalyses the reaction 5-O-(1-carboxyvinyl)-3-phosphoshikimate = chorismate + phosphate. It functions in the pathway metabolic intermediate biosynthesis; chorismate biosynthesis; chorismate from D-erythrose 4-phosphate and phosphoenolpyruvate: step 7/7. In terms of biological role, catalyzes the anti-1,4-elimination of the C-3 phosphate and the C-6 proR hydrogen from 5-enolpyruvylshikimate-3-phosphate (EPSP) to yield chorismate, which is the branch point compound that serves as the starting substrate for the three terminal pathways of aromatic amino acid biosynthesis. This reaction introduces a second double bond into the aromatic ring system. The sequence is that of Chorismate synthase from Bartonella bacilliformis (strain ATCC 35685 / KC583 / Herrer 020/F12,63).